The primary structure comprises 358 residues: NADH-quinone oxidoreductase subunit H (358 aa).

Helical transmembrane passes span 30 to 50 (IVIGVCIMLAYAVIAIIMIFM), 96 to 116 (FLYNLAPYIVILASIMAFSCL), 129 to 149 (VGIFFLLAASSIGVVGILLAG), 165 to 185 (GAQMISYELSVGLSILTIVIL), 201 to 221 (GWFLFKGHIPALIAFIIYLIA), 264 to 284 (LFIIAAVATTIFLGGWMPLHI), 297 to 317 (IPGFIWFFGKSFFVVWLLMWI), and 336 to 356 (YLVPIGLCNLLLMVIIVVFKL).

Belongs to the complex I subunit 1 family. In terms of assembly, NDH-1 is composed of 14 different subunits. Subunits NuoA, H, J, K, L, M, N constitute the membrane sector of the complex.

The protein resides in the cell inner membrane. It catalyses the reaction a quinone + NADH + 5 H(+)(in) = a quinol + NAD(+) + 4 H(+)(out). In terms of biological role, NDH-1 shuttles electrons from NADH, via FMN and iron-sulfur (Fe-S) centers, to quinones in the respiratory chain. The immediate electron acceptor for the enzyme in this species is believed to be ubiquinone. Couples the redox reaction to proton translocation (for every two electrons transferred, four hydrogen ions are translocated across the cytoplasmic membrane), and thus conserves the redox energy in a proton gradient. This subunit may bind ubiquinone. In Phocaeicola vulgatus (strain ATCC 8482 / DSM 1447 / JCM 5826 / CCUG 4940 / NBRC 14291 / NCTC 11154) (Bacteroides vulgatus), this protein is NADH-quinone oxidoreductase subunit H.